The sequence spans 1530 residues: MGTALVQHGGCCLLCLSLLLLGCWAELGSGLEFPGAEGQWTRFPKWNACCESEMSFQLKTRSARGLVLYFDDEGFCDFLELILTRGGRLQLSFSIFCAEPATLLADTPVNDGAWHSVRIRRQFRNTTLYIDRAEAKWVEVKSKRRDMTVFSGLFVGGLPPELRAAALKLTLASVREREPFKGWIRDVRVNSSQALPVDGSEVKLDEEPPNSGGGSPCEAGDEGDGGVCLNGGVCSVVDDQAVCDCSRTGFRGKDCSQEDNNVEGLAHLMMGDQGKSKEDNNVEGLAHLMMGDQGKEEYIATFKGSEYFCYDLSQNPIQSSSDEITLSFKTLQRNGLMLHTGKSADYVNLALKNGAVSLVINLGSGAFEALVEPVNGKFNDNAWHDVKVTRNLRQHSGIGHAMVNKLHCSVTISVDGILTTTGYTQEDYTMLGSDDFFYVGGSPSTADLPGSPVSNNFMGCLKEVVYKNNDVRLELSRLAKQGDPKMKIHGVVAFKCENVATLDPITFETPESFISLPKWNAKKTGSISFDFRTTEPNGLILFSHGKPRHQKDAKHPQMIKVDFFAIEMLDGHLYLLLDMGSGTIKIKALQKKVNDGEWYHVDFQRDGRSGTISVNTLRTPYTAPGESEILDLDDELYLGGLPENKAGLVFPTEVWTALLNYGYVGCIRDLFIDGQSKDIRQMAEIQSTAGVKPSCSRETAKPCLSNPCKNNGMCRDGWNRYVCDCSGTGYLGRSCEREATVLSYDGSMFMKIQLPVVMHTEAEDVSLRFRSQRAYGILMATTSRDSADTLRLELDAGRVKLTVNLDCIRINCNSSKGPETLFAGYNLNDNEWHTVRVVRRGKSLKLTVDDQQAMTGQMAGDHTRLEFHNIETGIITERRYLSSVPSNFIGHLQSLTFNGMAYIDLCKNGDIDYCELNARFGFRNIIADPVTFKTKSSYVALATLQAYTSMHLFFQFKTTSLDGLILYNSGDGNDFIVVELVKGYLHYVFDLGNGANLIKGSSNKPLNDNQWHNVMISRDTSNLHTVKIDTKITTQITAGARNLDLKSDLYIGGVAKETYKSLPKLVHAKEGFQGCLASVDLNGRLPDLISDALFCNGQIERGCEGPSTTCQEDSCSNQGVCLQQWDGFSCDCSMTSFSGPLCNDPGTTYIFSKGGGQITHKWPPNDRPSTRADRLAIGFSTVQKEAVLVRVDSSSGLGDYLELHIHQGKIGVKFNVGTDDIAIEESNAIINDGKYHVVRFTRSGGNATLQVDSWPVIERYPAGNNDNERLAIARQRIPYRLGRVVDEWLLDKGRQLTIFNSQATIIIGGKEQGQPFQGQLSGLYYNGLKVLNMAAENDANIAIVGNVRLVGEVPSSMTTESTATAMQSEMSTSIMETTTTLATSTARRGKPPTKEPISQTTDDILVASAECPSDDEDIDPCEPSSGGLANPTRVGGREPYPGSAEVIRESSSTTGMVVGIVAAAALCILILLYAMYKYRNRDEGSYHVDESRNYISNSAQSNGAVVKEKQPSSAKSANKNKKNKDKEYYV.

The first 30 residues, 1–30 (MGTALVQHGGCCLLCLSLLLLGCWAELGSG), serve as a signal peptide directing secretion. Positions 31–217 (LEFPGAEGQW…PPNSGGGSPC (187 aa)) constitute a Laminin G-like 1 domain. At 31-1454 (LEFPGAEGQW…EVIRESSSTT (1424 aa)) the chain is on the extracellular side. Asn-125 and Asn-190 each carry an N-linked (GlcNAc...) asparagine glycan. The interval 196 to 219 (PVDGSEVKLDEEPPNSGGGSPCEA) is disordered. The EGF-like 1 domain maps to 213-255 (GGSPCEAGDEGDGGVCLNGGVCSVVDDQAVCDCSRTGFRGKDC). Disulfide bonds link Cys-228-Cys-243 and Cys-245-Cys-255. 2 Laminin G-like domains span residues 299-496 (IATF…AFKC) and 503-695 (DPIT…KPSC). Residues Asp-345, Leu-362, and Met-430 each coordinate Ca(2+). 5 disulfides stabilise this stretch: Cys-460–Cys-496, Cys-666–Cys-695, Cys-703–Cys-714, Cys-708–Cys-723, and Cys-725–Cys-735. An EGF-like 2 domain is found at 699-736 (TAKPCLSNPCKNNGMCRDGWNRYVCDCSGTGYLGRSCE). 2 Laminin G-like domains span residues 741–914 (VLSY…IDYC) and 928–1103 (DPVT…ERGC). Residues Asp-788 and Leu-805 each coordinate Ca(2+). Asn-813 is a glycosylation site (N-linked (GlcNAc...) asparagine). Arg-864 provides a ligand contact to Ca(2+). 5 cysteine pairs are disulfide-bonded: Cys-906–Cys-914, Cys-1075–Cys-1103, Cys-1110–Cys-1121, Cys-1115–Cys-1130, and Cys-1132–Cys-1142. The 38-residue stretch at 1106–1143 (PSTTCQEDSCSNQGVCLQQWDGFSCDCSMTSFSGPLCN) folds into the EGF-like 3 domain. One can recognise a Laminin G-like 6 domain in the interval 1149-1347 (YIFSKGGGQI…DANIAIVGNV (199 aa)). Ca(2+) contacts are provided by Asp-1199 and Val-1216. A glycan (N-linked (GlcNAc...) asparagine) is linked at Asn-1246. Positions 1298 and 1300 each coordinate Ca(2+). The O-linked (Xyl...) (heparan sulfate) serine glycan is linked to Ser-1408. The segment at 1412–1443 (PSDDEDIDPCEPSSGGLANPTRVGGREPYPGS) is disordered. The chain crosses the membrane as a helical span at residues 1455–1475 (GMVVGIVAAAALCILILLYAM). Residues 1476-1530 (YKYRNRDEGSYHVDESRNYISNSAQSNGAVVKEKQPSSAKSANKNKKNKDKEYYV) are Cytoplasmic-facing. Residues 1497–1523 (NSAQSNGAVVKEKQPSSAKSANKNKKN) are interaction with CASK. The tract at residues 1497–1530 (NSAQSNGAVVKEKQPSSAKSANKNKKNKDKEYYV) is disordered.

It belongs to the neurexin family. In terms of assembly, interacts (via laminin G-like domain 2 and/or laminin G-like domain 6) with NLGN1 forming a heterotetramer, where one NLGN1 dimer interacts with one NRXN1 dimer. Also interacts (via laminin G-like domain 2 and/or laminin G-like domain 6) with NLGN2, NLGN3 and NLGN4L; interactions with NLGN1, NLGN2, NLGN3 and NLGN4L are calcium-dependent. Interacts (via cytoplasmic C-terminal region) with CASK (via the PDZ, SH3 and guanylate kinase-like domains). Interacts (via cytoplasmic C-terminus) with CASKIN1 and APBA1. Interacts (via laminin G-like domain 2) with NXPH1 and NXPH3. Alpha-type isoforms (neurexin-1-alpha) interact (via laminin G-like domain 2 and/or laminin G-like domain 6) with DAG1 (via alpha-dystroglycan chain). Interacts with LRRTM1, LRRTM2, LRRTM3 and LRRTM4. Interacts with SYT13 and SYTL1. Interacts with CBLN1, CBLN2 and, less avidly, with CBLN4. Interacts with CLSTN3. Alpha-type isoforms interact with alpha-latrotoxin from spider venom. In terms of processing, O-glycosylated; contains heparan sulfate. Heparan sulfate attachment is required for synapse development by mediating interactions with neuroligins and LRRTM2. Brain (neuronal synapse).

It localises to the presynaptic cell membrane. In terms of biological role, cell surface protein involved in cell-cell-interactions, exocytosis of secretory granules and regulation of signal transmission. Function is isoform-specific. Alpha-type isoforms have a long N-terminus with six laminin G-like domains and play an important role in synaptic signal transmission. Alpha-type isoforms play a role in the regulation of calcium channel activity and Ca(2+)-triggered neurotransmitter release at synapses and at neuromuscular junctions. They play an important role in Ca(2+)-triggered exocytosis of secretory granules in pituitary gland. They may affect their functions at synapses and in endocrine cells via their interactions with proteins from the exocytotic machinery. Likewise, alpha-type isoforms play a role in regulating the activity of postsynaptic NMDA receptors, a subtype of glutamate-gated ion channels. Both alpha-type and beta-type isoforms may play a role in the formation or maintenance of synaptic junctions via their interactions (via the extracellular domains) with neuroligin family members, CBLN1 or CBLN2. In vitro, triggers the de novo formation of presynaptic structures. May be involved in specification of excitatory synapses. Alpha-type isoforms were first identified as receptors for alpha-latrotoxin from spider venom. The protein is Neurexin-1 (Nrxn1) of Rattus norvegicus (Rat).